Consider the following 241-residue polypeptide: Platelet-derived growth factor subunit B (241 aa).

Residues 1-20 (MNRCWALFLPLCCYLRLVSA) form the signal peptide. Positions 21–81 (EGDPIPEELY…ELESSSRGRR (61 aa)) are cleaved as a propeptide — removed in mature form. Asparagine 63 carries an N-linked (GlcNAc...) asparagine glycan. Disulfide bonds link cysteine 97–cysteine 141, cysteine 130–cysteine 178, and cysteine 134–cysteine 180. Residues 191–241 (RSPGTSREQRAKTPQARVTIRTVRIRRPPKGKHRKFKHTHDKAALKETLGA) constitute a propeptide, removed in mature form. Over residues 217–230 (RPPKGKHRKFKHTH) the composition is skewed to basic residues. Positions 217-241 (RPPKGKHRKFKHTHDKAALKETLGA) are disordered.

The protein belongs to the PDGF/VEGF growth factor family. Antiparallel homodimer; disulfide-linked. Antiparallel heterodimer with PDGFA; disulfide-linked. The PDGFB homodimer interacts with PDGFRA and PDGFRB homodimers, and with heterodimers formed by PDGFRA and PDGFRB. The heterodimer composed of PDGFA and PDGFB interacts with PDGFRB homodimers, and with heterodimers formed by PDGFRA and PDGFRB. Interacts with XLKD1. Interacts with LRP1. Interacts with SORL1 (via the N-terminal ectodomain). Interacts with CD82; this interaction inhibits PDGFB-mediated signaling pathway. As to expression, localized to vascular smooth muscle cells. Also weakly expressed by cortical interstitial cells but absent in tubules. Up-regulated in areas of renal fibrosis. In mice with unilateral ureteral obstruction, an increased expression in interstitial cells and in some tubules observed after day 4.

It is found in the secreted. Functionally, growth factor that plays an essential role in the regulation of embryonic development, cell proliferation, cell migration, survival and chemotaxis. Potent mitogen for cells of mesenchymal origin. Required for normal proliferation and recruitment of pericytes and vascular smooth muscle cells in the central nervous system, skin, lung, heart and placenta. Required for normal blood vessel development, and for normal development of kidney glomeruli. Plays an important role in wound healing. Signaling is modulated by the formation of heterodimers with PDGFA. The chain is Platelet-derived growth factor subunit B (Pdgfb) from Mus musculus (Mouse).